The following is a 776-amino-acid chain: Hepatocyte growth factor-regulated tyrosine kinase substrate (776 aa).

The 129-residue stretch at 15-143 (ATSQLLLETD…IMKVEGHVFP (129 aa)) folds into the VHS domain. The FYVE-type zinc-finger motif lies at 160–220 (WVDAEECHRC…VCEPCYEQLN (61 aa)). Residues cysteine 166, cysteine 169, cysteine 182, cysteine 185, cysteine 190, and cysteine 193 each coordinate Zn(2+). Lysine 207 is modified (N6-acetyllysine). Zn(2+)-binding residues include cysteine 212 and cysteine 215. Phosphotyrosine is present on tyrosine 216. The interval 223-319 (AEGKAASTTE…SPVNSSAPLA (97 aa)) is disordered. The interaction with SNX1 stretch occupies residues 225–542 (GKAASTTELP…QRLQEQEKER (318 aa)). Residues 258–277 (QEEEELQLALALSQSEAEEK) form the UIM domain. Residues 294–311 (PAPLASSAPPAGSLYSSP) are compositionally biased toward low complexity. A phosphotyrosine mark is found at tyrosine 308, tyrosine 329, and tyrosine 334. Residues 338-401 (KQEEARKSPT…SEQYQNGESE (64 aa)) are disordered. The span at 379–398 (TDSQPITSCSGPFSEQYQNG) shows a compositional bias: polar residues. The interaction with SNAP25 and TRAK2 stretch occupies residues 444–542 (SINSTHPQLL…QRLQEQEKER (99 aa)). An interaction with STAM region spans residues 453-571 (LELLNRLDER…FPLPYAQLQA (119 aa)). The interaction with NF2 stretch occupies residues 479–776 (ARGALSALRE…GNETQLISFD (298 aa)). The residue at position 550 (lysine 550) is an N6-succinyllysine. The tract at residues 719–776 (GQDASLPAQQPYITGQQPMYQQMAPSTGPPQQQPPVAQPPPTQGPPAQGNETQLISFD) is disordered. Polar residues predominate over residues 725–743 (PAQQPYITGQQPMYQQMAP). Residues 745 to 762 (TGPPQQQPPVAQPPPTQG) show a composition bias toward pro residues. The span at 767–776 (GNETQLISFD) shows a compositional bias: polar residues.

In terms of assembly, component of the ESCRT-0 complex composed of STAM or STAM2 and HGS. Part of a complex at least composed of HSG, STAM2 (or probably STAM) and EPS15. Interacts with STAM. Interacts with STAM2. Interacts with EPS15; the interaction is direct, calcium-dependent and inhibited by SNAP25. Identified in a complex with STAM and LITAF. Found in a complex with STAM and E3 ligase ITCH and DTX3L. Interacts with E3 ligase DTX3L; the interaction brings together STAM and HSG, promotes their recruitment to early endosomes and decreases STAM and HGS ubiquitination by ITCH. Interacts with NF2; the interaction is direct. Interacts with ubiquitin; the interaction is direct. Interacts with VPS37C. Interacts with SMAD1, SMAD2 and SMAD3. Interacts with TSG101; the interaction mediates the association with the ESCRT-I complex. Interacts with SNAP25; the interaction is direct and decreases with addition of increasing concentrations of free calcium. Interacts with SNX1; the interaction is direct. Component of a 550 kDa membrane complex at least composed of HGS and SNX1 but excluding EGFR. Interacts with TRAK2. Interacts with TRAK1. Component of the CART complex, at least composed of ACTN4, HGS/HRS, MYO5B and TRIM3. Interacts (via UIM domain) with UBQLN1 (via ubiquitin-like domain). Interacts with ARRDC3. Identified in a complex containing at least ARRDC4, AVPR2 and HGS. Interacts with LAPTM4B; promotes HGS ubiquitination. Post-translationally, phosphorylated on Tyr-334. This phosphorylation occurs in response to EGF. A minor site of phosphorylation on Tyr-329 is detected. Protein phosphorylation may also be triggered in response to IL-2, GM-CSF and HGF. Ubiquitinated by ITCH. Ubiquitously expressed.

Its subcellular location is the cytoplasm. The protein localises to the early endosome membrane. The protein resides in the endosome. It is found in the multivesicular body membrane. Functionally, involved in intracellular signal transduction mediated by cytokines and growth factors. When associated with STAM, it suppresses DNA signaling upon stimulation by IL-2 and GM-CSF. Could be a direct effector of PI3-kinase in vesicular pathway via early endosomes and may regulate trafficking to early and late endosomes by recruiting clathrin. May concentrate ubiquitinated receptors within clathrin-coated regions. Involved in down-regulation of receptor tyrosine kinase via multivesicular body (MVBs) when complexed with STAM (ESCRT-0 complex). The ESCRT-0 complex binds ubiquitin and acts as a sorting machinery that recognizes ubiquitinated receptors and transfers them to further sequential lysosomal sorting/trafficking processes. Involved in receptor recycling via its association with the CART complex, a multiprotein complex required for efficient transferrin receptor recycling but not for EGFR degradation. May contribute to the efficient recruitment of SMADs to the activin receptor complex. The protein is Hepatocyte growth factor-regulated tyrosine kinase substrate (Hgs) of Rattus norvegicus (Rat).